We begin with the raw amino-acid sequence, 299 residues long: MPT51/MPB51 antigen (299 aa).

The first 26 residues, 1–26 (MKGRSALLRALWIAALSFGLGGVAVA), serve as a signal peptide directing secretion.

It belongs to the mycobacterial A85 antigen family. In terms of assembly, homodimer.

The protein resides in the secreted. In terms of biological role, may have a role in host tissue attachment, whereby ligands may include the serum protein fibronectin and small sugars. This chain is MPT51/MPB51 antigen (mpt51), found in Mycobacterium bovis (strain ATCC BAA-935 / AF2122/97).